Reading from the N-terminus, the 124-residue chain is Small polypeptide ROTUNDIFOLIA LIKE 3 (124 aa).

A disordered region spans residues 1–25 (MEDERWKLSSSKGRSKSGRSCSSSS). 2 N-linked (GlcNAc...) asparagine glycosylation sites follow: asparagine 35 and asparagine 38. Residues 59–75 (AWSAAGAGGGGASSSSS) form a helical membrane-spanning segment. Residues 60 to 95 (WSAAGAGGGGASSSSSSQHQHQQQQQQSNNSQRLSK) are disordered. Residues 71 to 91 (SSSSSSQHQHQQQQQQSNNSQ) show a composition bias toward low complexity. Residue asparagine 88 is glycosylated (N-linked (GlcNAc...) asparagine). Residues 92 to 124 (RLSKKCVEAVKEHRARFYIVRRCVSMLVCWRDY) are required for DVL/RTFL small polypeptide activity.

It belongs to the DVL/RTFL small polypeptides family.

The protein localises to the cell membrane. Its function is as follows. Small polypeptide acting as a regulatory molecule which coordinates cellular responses required for differentiation, growth and development, probably by restricting polar cell proliferation in lateral organs (e.g. leaves and petioles). The protein is Small polypeptide ROTUNDIFOLIA LIKE 3 of Oryza sativa subsp. indica (Rice).